The chain runs to 304 residues: MRLPIFLDTDPGIDDAVAIAAAIFAPELDLQLMTTVAGNVSVEKTTRNALQLLHFWNAEIPLAQGAAVPLVRAPRDAASVHGESGMAGYDFVEHNRKPLGIPAFLAIRDALMRAPEPVTLVAIGPLTNIALLLSQCPECKPYIRRLVIMGGSAGRGNCTPNAEFNIAADPEAAACVFRSGIEIVMCGLDVTNQAILTPDYLSTLPQLNRTGKMLHALFSHYRSGSMQSGLRMHDLCAIAWLVRPDLFTLKPCFVAVETQGEFTSGTTVVDIDGCLGKPANVQVALDLNVKGFQQWVAEVLALVP.

H233 is a catalytic residue.

This sequence belongs to the IUNH family. RihC subfamily.

Its function is as follows. Hydrolyzes both purine and pyrimidine ribonucleosides with a broad-substrate specificity. The polypeptide is Non-specific ribonucleoside hydrolase RihC (Escherichia coli O157:H7).